Here is a 172-residue protein sequence, read N- to C-terminus: Translocon-associated protein subunit delta (172 aa).

The signal sequence occupies residues 1 to 24 (MAALASLGALALLLLSGLSCCSEA). A disulfide bond links C25 and C56. The Lumenal portion of the chain corresponds to 25–143 (CVEPQITPSY…SVDHRGTWNG (119 aa)). A Glycyl lysine isopeptide (Lys-Gly) (interchain with G-Cter in ubiquitin) cross-link involves residue K72. The helical transmembrane segment at 144-164 (PWVSTEVLAAAIGLVIYYLAF) threads the bilayer. The Cytoplasmic portion of the chain corresponds to 165 to 172 (SAKSHIQA).

Belongs to the TRAP-delta family. Heterotetramer of TRAP-alpha, TRAP-beta, TRAP-delta and TRAP-gamma.

Its subcellular location is the endoplasmic reticulum membrane. Functionally, TRAP proteins are part of a complex whose function is to bind calcium to the ER membrane and thereby regulate the retention of ER resident proteins. This is Translocon-associated protein subunit delta (SSR4) from Bos taurus (Bovine).